The chain runs to 62 residues: Large ribosomal subunit protein bL28 (62 aa).

The segment at 1–26 is disordered; sequence MARKCYVTGKSPKSGNNRSHALNKTK. Over residues 11-20 the composition is skewed to polar residues; that stretch reads SPKSGNNRSH.

This sequence belongs to the bacterial ribosomal protein bL28 family.

In Exiguobacterium sp. (strain ATCC BAA-1283 / AT1b), this protein is Large ribosomal subunit protein bL28.